A 224-amino-acid polypeptide reads, in one-letter code: UPF0758 protein Hhal_2301 (224 aa).

The 123-residue stretch at Thr-102–Leu-224 folds into the MPN domain. Residues His-173, His-175, and Asp-186 each coordinate Zn(2+). Residues His-173–Asp-186 carry the JAMM motif motif.

This sequence belongs to the UPF0758 family.

This chain is UPF0758 protein Hhal_2301, found in Halorhodospira halophila (strain DSM 244 / SL1) (Ectothiorhodospira halophila (strain DSM 244 / SL1)).